Reading from the N-terminus, the 415-residue chain is Exodeoxyribonuclease 7 large subunit (415 aa).

Belongs to the XseA family. As to quaternary structure, heterooligomer composed of large and small subunits.

Its subcellular location is the cytoplasm. It catalyses the reaction Exonucleolytic cleavage in either 5'- to 3'- or 3'- to 5'-direction to yield nucleoside 5'-phosphates.. In terms of biological role, bidirectionally degrades single-stranded DNA into large acid-insoluble oligonucleotides, which are then degraded further into small acid-soluble oligonucleotides. This chain is Exodeoxyribonuclease 7 large subunit, found in Mycobacterium bovis (strain ATCC BAA-935 / AF2122/97).